The chain runs to 1141 residues: Myosin-binding protein C, fast-type (1141 aa).

Positions 1–62 are disordered; it reads MPEAKPAAKK…VFLKKPDSVS (62 aa). The segment covering 13-39 has biased composition (basic and acidic residues); the sequence is KGKDAPKGAPKEAPPKEAPAEAPKEAP. Ig-like C2-type domains follow at residues 50–153, 255–344, 345–437, 438–538, and 539–638; these read PTGV…NIDV, SAAF…VKEP, PVLI…VEEK, QLEV…KQEP, and PKIH…VVDV. Fibronectin type-III domains lie at 641 to 737 and 739 to 834; these read PPEA…IAPT and EPLH…IREI. Positions 838–932 constitute an Ig-like C2-type 6 domain; sequence PKIRLPRHLR…ATIRIRVVEK (95 aa). A Fibronectin type-III 3 domain is found at 935-1030; that stretch reads PPINVMVKEV…SKNTARILKT (96 aa). Residues 1048–1141 enclose the Ig-like C2-type 7 domain; the sequence is PKFLTPLIDR…ECKLEVRVPQ (94 aa).

It belongs to the immunoglobulin superfamily. MyBP family.

Functionally, thick filament-associated protein located in the crossbridge region of vertebrate striated muscle a bands. In vitro it binds MHC, F-actin and native thin filaments, and modifies the activity of actin-activated myosin ATPase. It may modulate muscle contraction or may play a more structural role. This Homo sapiens (Human) protein is Myosin-binding protein C, fast-type (MYBPC2).